We begin with the raw amino-acid sequence, 327 residues long: Phenylalanine--tRNA ligase alpha subunit (327 aa).

Mg(2+) is bound at residue E252.

This sequence belongs to the class-II aminoacyl-tRNA synthetase family. Phe-tRNA synthetase alpha subunit type 1 subfamily. In terms of assembly, tetramer of two alpha and two beta subunits. Requires Mg(2+) as cofactor.

The protein resides in the cytoplasm. It catalyses the reaction tRNA(Phe) + L-phenylalanine + ATP = L-phenylalanyl-tRNA(Phe) + AMP + diphosphate + H(+). The polypeptide is Phenylalanine--tRNA ligase alpha subunit (Aeromonas salmonicida (strain A449)).